Reading from the N-terminus, the 423-residue chain is D-tagatose-1,6-bisphosphate aldolase subunit GatZ (423 aa).

Belongs to the GatZ/KbaZ family. GatZ subfamily. In terms of assembly, forms a complex with GatY.

It participates in carbohydrate metabolism; D-tagatose 6-phosphate degradation; D-glyceraldehyde 3-phosphate and glycerone phosphate from D-tagatose 6-phosphate: step 2/2. Its function is as follows. Component of the tagatose-1,6-bisphosphate aldolase GatYZ that is required for full activity and stability of the Y subunit. Could have a chaperone-like function for the proper and stable folding of GatY. When expressed alone, GatZ does not show any aldolase activity. Is involved in the catabolism of galactitol. The chain is D-tagatose-1,6-bisphosphate aldolase subunit GatZ from Salmonella choleraesuis (strain SC-B67).